The sequence spans 181 residues: MSRMKQKYNDIVPALREECGVQNTMQTPKLEKIVISVGAGEEGRDSKLIANMADTISLIAGQKAVIVNAKKSVAGFKAREGAPSGIRVTLRGDNMYNFFDKLVSIALPRVKDFRGTPRKGFDGRGNYNFGLQEQLMFPEVEFDNIIKTHGMNITIVTSTEDDKQAFTLLEKLGMPFAKGRN.

It belongs to the universal ribosomal protein uL5 family. Part of the 50S ribosomal subunit; part of the 5S rRNA/L5/L18/L25 subcomplex. Contacts the 5S rRNA and the P site tRNA. Forms a bridge to the 30S subunit in the 70S ribosome.

In terms of biological role, this is one of the proteins that bind and probably mediate the attachment of the 5S RNA into the large ribosomal subunit, where it forms part of the central protuberance. In the 70S ribosome it contacts protein S13 of the 30S subunit (bridge B1b), connecting the 2 subunits; this bridge is implicated in subunit movement. Contacts the P site tRNA; the 5S rRNA and some of its associated proteins might help stabilize positioning of ribosome-bound tRNAs. In Sulfurovum sp. (strain NBC37-1), this protein is Large ribosomal subunit protein uL5.